Here is a 282-residue protein sequence, read N- to C-terminus: 2-dehydro-3-deoxyphosphooctonate aldolase (282 aa).

Belongs to the KdsA family.

It is found in the cytoplasm. The enzyme catalyses D-arabinose 5-phosphate + phosphoenolpyruvate + H2O = 3-deoxy-alpha-D-manno-2-octulosonate-8-phosphate + phosphate. The protein operates within carbohydrate biosynthesis; 3-deoxy-D-manno-octulosonate biosynthesis; 3-deoxy-D-manno-octulosonate from D-ribulose 5-phosphate: step 2/3. It functions in the pathway bacterial outer membrane biogenesis; lipopolysaccharide biosynthesis. The protein is 2-dehydro-3-deoxyphosphooctonate aldolase of Shewanella pealeana (strain ATCC 700345 / ANG-SQ1).